The sequence spans 426 residues: Serine--tRNA ligase (426 aa).

233-235 lines the L-serine pocket; sequence TAE. An ATP-binding site is contributed by 264–266; that stretch reads RSE. Glu-287 is an L-serine binding site. Position 351–354 (351–354) interacts with ATP; sequence EISS. Ser-387 is an L-serine binding site.

The protein belongs to the class-II aminoacyl-tRNA synthetase family. Type-1 seryl-tRNA synthetase subfamily. In terms of assembly, homodimer. The tRNA molecule binds across the dimer.

It is found in the cytoplasm. The enzyme catalyses tRNA(Ser) + L-serine + ATP = L-seryl-tRNA(Ser) + AMP + diphosphate + H(+). It carries out the reaction tRNA(Sec) + L-serine + ATP = L-seryl-tRNA(Sec) + AMP + diphosphate + H(+). The protein operates within aminoacyl-tRNA biosynthesis; selenocysteinyl-tRNA(Sec) biosynthesis; L-seryl-tRNA(Sec) from L-serine and tRNA(Sec): step 1/1. In terms of biological role, catalyzes the attachment of serine to tRNA(Ser). Is also able to aminoacylate tRNA(Sec) with serine, to form the misacylated tRNA L-seryl-tRNA(Sec), which will be further converted into selenocysteinyl-tRNA(Sec). This chain is Serine--tRNA ligase, found in Pseudomonas paraeruginosa (strain DSM 24068 / PA7) (Pseudomonas aeruginosa (strain PA7)).